Consider the following 213-residue polypeptide: Large ribosomal subunit protein uL1 (213 aa).

It belongs to the universal ribosomal protein uL1 family. As to quaternary structure, part of the 50S ribosomal subunit.

In terms of biological role, binds directly to 23S rRNA. Probably involved in E site tRNA release. Its function is as follows. Protein L1 is also a translational repressor protein, it controls the translation of its operon by binding to its mRNA. This is Large ribosomal subunit protein uL1 from Methanococcus maripaludis (strain C6 / ATCC BAA-1332).